Reading from the N-terminus, the 198-residue chain is Recombination protein RecR (198 aa).

The C4-type zinc finger occupies 57 to 72 (CSICGRLTDDDPCSIC). Positions 80–175 (TTILVLEDSR…KVTRLARGLA (96 aa)) constitute a Toprim domain.

It belongs to the RecR family.

May play a role in DNA repair. It seems to be involved in an RecBC-independent recombinational process of DNA repair. It may act with RecF and RecO. The protein is Recombination protein RecR of Streptococcus pneumoniae serotype 2 (strain D39 / NCTC 7466).